A 309-amino-acid chain; its full sequence is Putative F-box protein At4g05475 (309 aa).

Residues 1–26 (MATSTTLQSLLMKEDEEQRNKRRTTS) form a disordered region. An F-box domain is found at 37–84 (RINWVDLPPELTTSILLRLSVTDILDNARKLCRAWRRICKDPSMWRKI).

This is Putative F-box protein At4g05475 from Arabidopsis thaliana (Mouse-ear cress).